The primary structure comprises 517 residues: Bifunctional purine biosynthesis protein PurH (517 aa).

An MGS-like domain is found at 1–146; the sequence is MKRLALLSTS…KNFAHLTVLC (146 aa).

It belongs to the PurH family.

It carries out the reaction (6R)-10-formyltetrahydrofolate + 5-amino-1-(5-phospho-beta-D-ribosyl)imidazole-4-carboxamide = 5-formamido-1-(5-phospho-D-ribosyl)imidazole-4-carboxamide + (6S)-5,6,7,8-tetrahydrofolate. It catalyses the reaction IMP + H2O = 5-formamido-1-(5-phospho-D-ribosyl)imidazole-4-carboxamide. The protein operates within purine metabolism; IMP biosynthesis via de novo pathway; 5-formamido-1-(5-phospho-D-ribosyl)imidazole-4-carboxamide from 5-amino-1-(5-phospho-D-ribosyl)imidazole-4-carboxamide (10-formyl THF route): step 1/1. It functions in the pathway purine metabolism; IMP biosynthesis via de novo pathway; IMP from 5-formamido-1-(5-phospho-D-ribosyl)imidazole-4-carboxamide: step 1/1. The sequence is that of Bifunctional purine biosynthesis protein PurH from Trichodesmium erythraeum (strain IMS101).